Consider the following 152-residue polypeptide: Deoxyuridine 5'-triphosphate nucleotidohydrolase (152 aa).

Substrate-binding positions include 72-74, asparagine 85, and 89-91; these read RSG and TID.

This sequence belongs to the dUTPase family. Requires Mg(2+) as cofactor.

The catalysed reaction is dUTP + H2O = dUMP + diphosphate + H(+). The protein operates within pyrimidine metabolism; dUMP biosynthesis; dUMP from dCTP (dUTP route): step 2/2. Its function is as follows. This enzyme is involved in nucleotide metabolism: it produces dUMP, the immediate precursor of thymidine nucleotides and it decreases the intracellular concentration of dUTP so that uracil cannot be incorporated into DNA. The protein is Deoxyuridine 5'-triphosphate nucleotidohydrolase of Rhodopseudomonas palustris (strain HaA2).